The primary structure comprises 447 residues: Cysteine--tRNA ligase (447 aa).

Cys28 serves as a coordination point for Zn(2+). The 'HIGH' region signature appears at 30–40; it reads PTVYNYIHIGN. Residues Cys211, His236, and Glu240 each coordinate Zn(2+). A 'KMSKS' region motif is present at residues 268–272; it reads KMSKS. Lys271 is a binding site for ATP.

It belongs to the class-I aminoacyl-tRNA synthetase family. In terms of assembly, monomer. Zn(2+) is required as a cofactor.

The protein resides in the cytoplasm. The enzyme catalyses tRNA(Cys) + L-cysteine + ATP = L-cysteinyl-tRNA(Cys) + AMP + diphosphate. The sequence is that of Cysteine--tRNA ligase from Streptococcus pyogenes serotype M3 (strain ATCC BAA-595 / MGAS315).